The chain runs to 306 residues: uncharacterized protein (306 aa).

9 helical membrane-spanning segments follow: residues 6-26 (VQIMISHSLMIGLWASAFPGI), 37-57 (HLALFRLLIGSMALLLFAVLT), 67-87 (IPAIFLLGFLGFAFYHILLNI), 91-111 (TVSAGVASLLVTTAPIFSAML), 125-145 (WLGSMISLLGVLLIAFGAGDF), 148-168 (SMSGILVILLAAFSESIYFVF), 177-197 (GFIPFVTFTIWGGTIPMLVFL), 213-233 (LSIVYLGLLPTVIPYFALAYV), and 251-271 (ALALIISWLWIGEIPTLLSLL). EamA domains follow at residues 17 to 140 (GLWA…LIAF) and 160 to 285 (FSES…FTYL).

This sequence belongs to the EamA transporter family.

It is found in the cell membrane. This is an uncharacterized protein from Bacillus subtilis (strain 168).